Consider the following 389-residue polypeptide: BTB/POZ domain-containing protein KCTD9 (389 aa).

The 80-residue stretch at 3 to 82 folds into the KHA domain; that stretch reads RVTLFLNGSP…PQTDSKPPEG (80 aa). Ser-11 bears the Phosphoserine mark. The 73-residue stretch at 89–161 folds into the BTB domain; it reads DWLTLNVGGR…LRHGQLIVND (73 aa). Pentapeptide repeat domains are found at residues 224–256, 258–297, and 338–376; these read NFSG…ANLC, ANLE…NFED, and CNLR…AIFE.

As to quaternary structure, forms pentamers. Component of a complex composed of 5 subunits of KCTD9 and 5 CUL3.

The protein operates within protein modification; protein ubiquitination. Substrate-specific adapter of a BCR (BTB-CUL3-RBX1) E3 ubiquitin-protein ligase complex, which mediates the ubiquitination of target proteins, leading to their degradation by the proteasome. This is BTB/POZ domain-containing protein KCTD9 (KCTD9) from Homo sapiens (Human).